Reading from the N-terminus, the 328-residue chain is Ferredoxin--NADP reductase 1 (328 aa).

FAD is bound by residues D28, Q36, Y41, A81, I116, D277, and S320.

Belongs to the ferredoxin--NADP reductase type 2 family. In terms of assembly, homodimer. It depends on FAD as a cofactor.

The enzyme catalyses 2 reduced [2Fe-2S]-[ferredoxin] + NADP(+) + H(+) = 2 oxidized [2Fe-2S]-[ferredoxin] + NADPH. The sequence is that of Ferredoxin--NADP reductase 1 from Sulfolobus acidocaldarius (strain ATCC 33909 / DSM 639 / JCM 8929 / NBRC 15157 / NCIMB 11770).